Here is a 195-residue protein sequence, read N- to C-terminus: Large ribosomal subunit protein uL18 (195 aa).

Belongs to the universal ribosomal protein uL18 family. As to quaternary structure, part of the 50S ribosomal subunit. Contacts the 5S and 23S rRNAs.

In terms of biological role, this is one of the proteins that bind and probably mediate the attachment of the 5S RNA into the large ribosomal subunit, where it forms part of the central protuberance. The polypeptide is Large ribosomal subunit protein uL18 (Korarchaeum cryptofilum (strain OPF8)).